A 76-amino-acid polypeptide reads, in one-letter code: KANTR integral membrane protein (76 aa).

The N-terminal stretch at Met1–Gly25 is a signal peptide. Topologically, residues Leu26 to Lys34 are extracellular. The helical transmembrane segment at Asn35–Ser55 threads the bilayer. Over Ala56–Phe76 the chain is Cytoplasmic.

The protein resides in the membrane. This is KANTR integral membrane protein from Homo sapiens (Human).